The following is a 310-amino-acid chain: Nucleotide-binding protein MAP_1147 (310 aa).

Gly-30–Gly-37 is a binding site for ATP. Asp-81 to Ser-84 lines the GTP pocket.

This sequence belongs to the RapZ-like family.

In terms of biological role, displays ATPase and GTPase activities. The sequence is that of Nucleotide-binding protein MAP_1147 from Mycolicibacterium paratuberculosis (strain ATCC BAA-968 / K-10) (Mycobacterium paratuberculosis).